Reading from the N-terminus, the 167-residue chain is Seroin (167 aa).

Positions 1–17 are cleaved as a signal peptide; the sequence is MATKILIFLSFVALSSA. The N-linked (GlcNAc...) asparagine glycan is linked to N26. Tandem repeats lie at residues 38-46, 56-64, 76-78, 79-81, and 82-84. The segment at 145–167 is disordered; that stretch reads VNETIVGDNPPKFEESRKESSSN. N146 is a glycosylation site (N-linked (GlcNAc...) asparagine). Positions 155–167 are enriched in basic and acidic residues; sequence PKFEESRKESSSN.

Produced by both the posterior (PSG) and middle (MSG) sections of silk glands.

It is found in the secreted. The sequence is that of Seroin from Galleria mellonella (Greater wax moth).